We begin with the raw amino-acid sequence, 113 residues long: Guanylate cyclase activator 2B (113 aa).

A signal peptide spans 1–27 (MASRAAAGLLLCGVALVFLVLLQGTQS). Residues 28-97 (VYIQYQGFRV…SIFQALRTIA (70 aa)) constitute a propeptide that is removed on maturation. Disulfide bonds link C68–C81, C101–C109, and C104–C112.

It belongs to the guanylin family.

The protein resides in the secreted. Functionally, endogenous activator of intestinal guanylate cyclase. It stimulates this enzyme through the same receptor binding region as the heat-stable enterotoxins. May be a potent physiological regulator of intestinal fluid and electrolyte transport. May be an autocrine/paracrine regulator of intestinal salt and water transport. This chain is Guanylate cyclase activator 2B (GUCA2B), found in Sus scrofa (Pig).